Consider the following 420-residue polypeptide: Dynein axonemal assembly factor 4 (420 aa).

Residues 3-87 enclose the CS domain; sequence VRVSEFSWQQ…KEPVLWESLS (85 aa). The mediates interaction with ESR1 and STUB1 stretch occupies residues 7 to 103; sequence EFSWQQTPAA…EMMQRIREKS (97 aa). The segment covering 165 to 192 has biased composition (basic and acidic residues); sequence CQKKADGQKRVQRKEKPLQGKQAEERGA. The segment at 165–212 is disordered; that stretch reads CQKKADGQKRVQRKEKPLQGKQAEERGALKPQSLPRKAPPTRLPTRGR. TPR repeat units lie at residues 288–321, 323–355, and 364–397; these read PDWL…NRKI, VLYL…LTPP, and MKAH…DPAN.

In terms of assembly, interacts with ZMYND10. Interacts with STUB1. Interacts with ESR1 and ESR2. Interacts with DNAAF2. Interacts with CCT3, CCT4, CCT5 and CCT8. Interacts with DNAAF6/PIH1D3.

It is found in the nucleus. It localises to the cytoplasm. The protein resides in the cell projection. The protein localises to the neuron projection. Its subcellular location is the dynein axonemal particle. Involved in neuronal migration during development of the cerebral neocortex. May regulate the stability and proteasomal degradation of the estrogen receptors that play an important role in neuronal differentiation, survival and plasticity. Axonemal dynein assembly factor required for ciliary motility. In Rattus norvegicus (Rat), this protein is Dynein axonemal assembly factor 4.